A 1283-amino-acid chain; its full sequence is Bifunctional dioxygenase (DOX)-epoxy alcohol synthase (EAS) (1283 aa).

The tract at residues 1–64 (MAEHKNGVAT…LPKEMGDGSY (64 aa)) is disordered. The fatty acid alpha-dioxygenase stretch occupies residues 130-476 (TNSFISQLWN…DGKFNDDELV (347 aa)). His-227 contacts heme b. Tyr-405 is an active-site residue. His-408 lines the heme b pocket. The interval 684–1108 (INIIGYNAAK…WDDGCGTDLF (425 aa)) is epoxy alcohol synthase. Cys-1035 lines the heme pocket.

It in the N-terminal section; belongs to the peroxidase family. In the C-terminal section; belongs to the cytochrome P450 family. As to quaternary structure, homotetramer. The cofactor is heme b. Heme is required as a cofactor.

It carries out the reaction (9Z,12Z)-octadecadienoate + O2 = (8E,10R,12Z)-10-hydroperoxyoctadeca-8,12-dienoate. The catalysed reaction is (8E,10R,12Z)-10-hydroperoxyoctadeca-8,12-dienoate = (12S,13R)-epoxy-(10R)-hydroxy-(8E)-octadecenoate. It catalyses the reaction (9Z)-octadecenoate + O2 = (8R)-hydroperoxy-(9Z)-octadecenoate. Functionally, bifunctional dioxygenase (DOX)-epoxy alcohol synthase (EAS) that converts linoleic acid (18:2n-6) sequentially to 10(R)-hydroperoxy-8(E),12(Z)-octadecadienoic acid (10R-HPODE) and 10R-HPODE further to 12(13)-epoxy-10-hydroxy-8(E)-octa-decenoic acid as the end product. Linoleic acid is oxidized mainly to the R stereoisomer of 10-HPODE. The dioxygenase domain is also able to oygenate position C-8 of linoleic acid to produce 8(R)-hydroperoxy-8(E),12(Z)-octadecadienoic acid (8R-HPODE). The chain is Bifunctional dioxygenase (DOX)-epoxy alcohol synthase (EAS) from Fusarium oxysporum (strain Fo5176) (Fusarium vascular wilt).